The following is a 293-amino-acid chain: Formamidopyrimidine-DNA glycosylase (293 aa).

Catalysis depends on P2, which acts as the Schiff-base intermediate with DNA. E3 acts as the Proton donor in catalysis. Catalysis depends on K58, which acts as the Proton donor; for beta-elimination activity. DNA is bound by residues H104, R123, and R166. An FPG-type zinc finger spans residues 257-293 (AVYDREGEPCRSKGCDGVVKRFVQNGRSTFWCPKCQK). Residue R283 is the Proton donor; for delta-elimination activity of the active site.

Belongs to the FPG family. As to quaternary structure, monomer. Zn(2+) is required as a cofactor.

The enzyme catalyses Hydrolysis of DNA containing ring-opened 7-methylguanine residues, releasing 2,6-diamino-4-hydroxy-5-(N-methyl)formamidopyrimidine.. The catalysed reaction is 2'-deoxyribonucleotide-(2'-deoxyribose 5'-phosphate)-2'-deoxyribonucleotide-DNA = a 3'-end 2'-deoxyribonucleotide-(2,3-dehydro-2,3-deoxyribose 5'-phosphate)-DNA + a 5'-end 5'-phospho-2'-deoxyribonucleoside-DNA + H(+). Functionally, involved in base excision repair of DNA damaged by oxidation or by mutagenic agents. Acts as a DNA glycosylase that recognizes and removes damaged bases. Has a preference for oxidized purines, such as 7,8-dihydro-8-oxoguanine (8-oxoG). Has AP (apurinic/apyrimidinic) lyase activity and introduces nicks in the DNA strand. Cleaves the DNA backbone by beta-delta elimination to generate a single-strand break at the site of the removed base with both 3'- and 5'-phosphates. The protein is Formamidopyrimidine-DNA glycosylase of Rhodopseudomonas palustris (strain BisB18).